The sequence spans 112 residues: UPF0102 protein Pmob_0702 (112 aa).

This sequence belongs to the UPF0102 family.

The polypeptide is UPF0102 protein Pmob_0702 (Petrotoga mobilis (strain DSM 10674 / SJ95)).